Reading from the N-terminus, the 439-residue chain is UDP-N-acetylglucosamine--peptide N-acetylglucosaminyltransferase stabilizing protein GtfB (439 aa).

Belongs to the GtfB family. Interacts with glycosyltransferase GtfA (Gtf2); probably forms a heterotetramer with 2 subunits each of GtfA and GtfB. Part of the accessory SecA2/SecY2 protein translocation apparatus.

The protein localises to the cell membrane. The protein operates within protein modification; protein glycosylation. Required for the polymorphic O-glycosylation of the serine-rich repeat protein Fap1. A stabilizing protein that is part of the accessory SecA2/SecY2 system specifically required to export Fap1, a serine-rich fimbrial adhesin encoded upstream in the same operon. The GtfA-GtfB (Gtf1-Gtf2 in this bacteria) complex adds GlcNAc from UDP-GlcNAc to Fap1, attaching the first sugar residue. Cannot use not UDP-Glc as substrate. Stabilizes the glycosylation activity of GtfA, causing it to partially localize to the cellular membrane where it is more protease resistant. The chain is UDP-N-acetylglucosamine--peptide N-acetylglucosaminyltransferase stabilizing protein GtfB from Streptococcus parasanguinis.